The sequence spans 575 residues: Alpha-(1,6)-fucosyltransferase (575 aa).

Over 1–9 (MRAWTGSWR) the chain is Cytoplasmic. A helical; Signal-anchor for type II membrane protein membrane pass occupies residues 10–30 (WIMLILFAWGTLLFYIGGHLV). Residues 31-575 (RDNDHPDHSS…KYPTYPEAEK (545 aa)) lie on the Lumenal side of the membrane. 3 disulfide bridges follow: Cys-204-Cys-266, Cys-212-Cys-230, and Cys-218-Cys-222. One can recognise a GT23 domain in the interval 206-493 (KARKLVCNIN…PDASANFHSL (288 aa)). Residue Ser-278 is modified to Phosphoserine. Positions 299–305 (PRPPYLP) match the SH3-binding motif. An important for donor substrate binding region spans residues 365–366 (RR). The cysteines at positions 465 and 472 are disulfide-linked. The SH3 domain occupies 502–563 (QNAHNQIAVY…PSYKVREKIE (62 aa)).

Belongs to the glycosyltransferase 23 family. In terms of processing, tyrosine phosphorylated by PKDCC/VLK.

The protein localises to the golgi apparatus. Its subcellular location is the golgi stack membrane. The enzyme catalyses N(4)-{beta-D-GlcNAc-(1-&gt;2)-alpha-D-Man-(1-&gt;3)-[beta-D-GlcNAc-(1-&gt;2)-alpha-D-Man-(1-&gt;6)]-beta-D-Man-(1-&gt;4)-beta-D-GlcNAc-(1-&gt;4)-beta-D-GlcNAc}-L-asparaginyl-[protein] + GDP-beta-L-fucose = an N(4)-{beta-D-GlcNAc-(1-&gt;2)-alpha-D-Man-(1-&gt;3)-[beta-D-GlcNAc-(1-&gt;2)-alpha-D-Man-(1-&gt;6)]-beta-D-Man-(1-&gt;4)-beta-D-GlcNAc-(1-&gt;4)-[alpha-L-Fuc-(1-&gt;6)]-beta-D-GlcNAc}-L-asparaginyl-[protein] + GDP + H(+). Its pathway is protein modification; protein glycosylation. Functionally, catalyzes the addition of fucose in alpha 1-6 linkage to the first GlcNAc residue, next to the peptide chains in N-glycans. The protein is Alpha-(1,6)-fucosyltransferase (Fut8) of Rattus norvegicus (Rat).